We begin with the raw amino-acid sequence, 139 residues long: Holo-[acyl-carrier-protein] synthase (139 aa).

Residues D9 and E63 each coordinate Mg(2+).

Belongs to the P-Pant transferase superfamily. AcpS family. It depends on Mg(2+) as a cofactor.

It localises to the cytoplasm. It carries out the reaction apo-[ACP] + CoA = holo-[ACP] + adenosine 3',5'-bisphosphate + H(+). Its function is as follows. Transfers the 4'-phosphopantetheine moiety from coenzyme A to a Ser of acyl-carrier-protein. This chain is Holo-[acyl-carrier-protein] synthase, found in Wigglesworthia glossinidia brevipalpis.